The following is a 69-amino-acid chain: Guanine nucleotide-binding protein subunit gamma (69 aa).

N-acetylserine is present on S2. A Cysteine methyl ester modification is found at C66. Residue C66 is the site of S-geranylgeranyl cysteine attachment. Residues 67-69 (SVL) constitute a propeptide, removed in mature form.

Belongs to the G protein gamma family. G proteins are composed of 3 units, alpha, beta and gamma. Interacts with gpbA, and this requires phlp1. Post-translationally, this protein is thought to be subject to lipidation, and this requires phlp1.

It is found in the cell membrane. Guanine nucleotide-binding proteins (G proteins) are involved as a modulator or transducer in various transmembrane signaling systems. This major G-protein of the squid photoreceptor is involved in visual transduction. The beta and gamma chains are required for the GTPase activity, for replacement of GDP by GTP, and for G protein-effector interaction. Required for normal chemotaxis in response to cAMP. The protein is Guanine nucleotide-binding protein subunit gamma (gpgA) of Dictyostelium discoideum (Social amoeba).